The chain runs to 128 residues: Lymphocyte antigen 6D (128 aa).

An N-terminal signal peptide occupies residues 1–20 (MKTVLLFLVALAAAAGPAQA). The region spanning 21 to 108 (LRCHVCTSSS…WQSAAPARTS (88 aa)) is the UPAR/Ly6 domain. 5 cysteine pairs are disulfide-bonded: C23–C45, C26–C32, C38–C63, C67–C86, and C87–C92. S98 carries the GPI-anchor amidated serine lipid modification. A propeptide spans 99–128 (WQSAAPARTSAHLGLALACGLLALLWAPGL) (removed in mature form).

The protein localises to the cell membrane. In terms of biological role, may act as a specification marker at earliest stage specification of lymphocytes between B- and T-cell development. Marks the earliest stage of B-cell specification. This chain is Lymphocyte antigen 6D (LY6D), found in Bos taurus (Bovine).